An 871-amino-acid chain; its full sequence is uncharacterized protein (871 aa).

11 consecutive transmembrane segments (helical) span residues 11 to 31 (AFVS…GLFL), 92 to 112 (YLFT…PILL), 139 to 159 (FYAH…IIYR), 380 to 400 (TILT…GCIS), 422 to 442 (LLGI…MSLV), 475 to 495 (VQVF…VQVI), 520 to 540 (FLLQ…TLLL), 562 to 582 (LSAP…TIMI), 586 to 606 (IIAP…YFAY), 629 to 649 (LFQV…LFVL), and 653 to 673 (WGAT…HLYF). Ser-725, Ser-726, Ser-727, Ser-729, Ser-737, and Ser-761 each carry phosphoserine. Polar residues predominate over residues 727–740 (SGSDEFLETSSRTS). The segment at 727-746 (SGSDEFLETSSRTSENTKEK) is disordered.

This sequence belongs to the CSC1 (TC 1.A.17) family.

It is found in the golgi apparatus membrane. In terms of biological role, acts as an osmosensitive calcium-permeable cation channel. This is an uncharacterized protein from Schizosaccharomyces pombe (strain 972 / ATCC 24843) (Fission yeast).